We begin with the raw amino-acid sequence, 364 residues long: 4-hydroxythreonine-4-phosphate dehydrogenase (364 aa).

Substrate contacts are provided by H148 and T149. A divalent metal cation-binding residues include H177, H216, and H301. Substrate is bound by residues K309, N318, and R327.

It belongs to the PdxA family. In terms of assembly, homodimer. It depends on Zn(2+) as a cofactor. Mg(2+) serves as cofactor. Requires Co(2+) as cofactor.

It localises to the cytoplasm. It carries out the reaction 4-(phosphooxy)-L-threonine + NAD(+) = 3-amino-2-oxopropyl phosphate + CO2 + NADH. Its pathway is cofactor biosynthesis; pyridoxine 5'-phosphate biosynthesis; pyridoxine 5'-phosphate from D-erythrose 4-phosphate: step 4/5. In terms of biological role, catalyzes the NAD(P)-dependent oxidation of 4-(phosphooxy)-L-threonine (HTP) into 2-amino-3-oxo-4-(phosphooxy)butyric acid which spontaneously decarboxylates to form 3-amino-2-oxopropyl phosphate (AHAP). The sequence is that of 4-hydroxythreonine-4-phosphate dehydrogenase from Campylobacter jejuni (strain RM1221).